Reading from the N-terminus, the 412-residue chain is Peptidase T (412 aa).

Zn(2+) is bound at residue His-84. Asp-86 is an active-site residue. Asp-146 provides a ligand contact to Zn(2+). Residue Glu-179 is the Proton acceptor of the active site. Residues Glu-180, Asp-202, and His-385 each contribute to the Zn(2+) site.

Belongs to the peptidase M20B family. Zn(2+) serves as cofactor.

The protein resides in the cytoplasm. It carries out the reaction Release of the N-terminal residue from a tripeptide.. Functionally, cleaves the N-terminal amino acid of tripeptides. This chain is Peptidase T, found in Haemophilus influenzae (strain 86-028NP).